Consider the following 638-residue polypeptide: 1-deoxy-D-xylulose-5-phosphate synthase (638 aa).

Thiamine diphosphate is bound by residues His-77 and 118 to 120 (AHA). Asp-149 contacts Mg(2+). Residues 150 to 151 (GS), Asn-178, Tyr-287, and Glu-369 contribute to the thiamine diphosphate site. Residue Asn-178 participates in Mg(2+) binding.

The protein belongs to the transketolase family. DXPS subfamily. In terms of assembly, homodimer. Requires Mg(2+) as cofactor. It depends on thiamine diphosphate as a cofactor.

The enzyme catalyses D-glyceraldehyde 3-phosphate + pyruvate + H(+) = 1-deoxy-D-xylulose 5-phosphate + CO2. The protein operates within metabolic intermediate biosynthesis; 1-deoxy-D-xylulose 5-phosphate biosynthesis; 1-deoxy-D-xylulose 5-phosphate from D-glyceraldehyde 3-phosphate and pyruvate: step 1/1. Its function is as follows. Catalyzes the acyloin condensation reaction between C atoms 2 and 3 of pyruvate and glyceraldehyde 3-phosphate to yield 1-deoxy-D-xylulose-5-phosphate (DXP). This Phenylobacterium zucineum (strain HLK1) protein is 1-deoxy-D-xylulose-5-phosphate synthase.